The primary structure comprises 1015 residues: GTPase-activating Rap/Ran-GAP domain-like protein 3 (1015 aa).

One can recognise a Rap-GAP domain in the interval 200–416; the sequence is LLVLEEQEGS…RTLDMLIRSL (217 aa). Positions 498–812 constitute a CNH domain; the sequence is PYDIVCGDSW…QLTASRSDIY (315 aa). Disordered stretches follow at residues 821-842 and 924-1004; these read SASNCSSRDTSSQSSPQTPTGY and ELLG…FTFS. Low complexity predominate over residues 823–835; the sequence is SNCSSRDTSSQSS. Residues 949–959 are compositionally biased toward basic and acidic residues; sequence KNKEEEQKRTA.

The protein belongs to the GARNL3 family.

In Danio rerio (Zebrafish), this protein is GTPase-activating Rap/Ran-GAP domain-like protein 3 (garnl3).